Reading from the N-terminus, the 212-residue chain is FMN-dependent NADH:quinone oxidoreductase (212 aa).

FMN contacts are provided by residues serine 10 and 17-19; that span reads SFS.

It belongs to the azoreductase type 1 family. In terms of assembly, homodimer. It depends on FMN as a cofactor.

It carries out the reaction 2 a quinone + NADH + H(+) = 2 a 1,4-benzosemiquinone + NAD(+). It catalyses the reaction N,N-dimethyl-1,4-phenylenediamine + anthranilate + 2 NAD(+) = 2-(4-dimethylaminophenyl)diazenylbenzoate + 2 NADH + 2 H(+). In terms of biological role, quinone reductase that provides resistance to thiol-specific stress caused by electrophilic quinones. Its function is as follows. Also exhibits azoreductase activity. Catalyzes the reductive cleavage of the azo bond in aromatic azo compounds to the corresponding amines. This Malacoplasma penetrans (strain HF-2) (Mycoplasma penetrans) protein is FMN-dependent NADH:quinone oxidoreductase.